We begin with the raw amino-acid sequence, 307 residues long: tRNA pseudouridine synthase B (307 aa).

The active-site Nucleophile is D45.

Belongs to the pseudouridine synthase TruB family. Type 1 subfamily.

It carries out the reaction uridine(55) in tRNA = pseudouridine(55) in tRNA. In terms of biological role, responsible for synthesis of pseudouridine from uracil-55 in the psi GC loop of transfer RNAs. This Heliobacterium mobile (Heliobacillus mobilis) protein is tRNA pseudouridine synthase B.